A 179-amino-acid polypeptide reads, in one-letter code: Large ribosomal subunit protein uL6 (179 aa).

It belongs to the universal ribosomal protein uL6 family. In terms of assembly, part of the 50S ribosomal subunit.

Its function is as follows. This protein binds to the 23S rRNA, and is important in its secondary structure. It is located near the subunit interface in the base of the L7/L12 stalk, and near the tRNA binding site of the peptidyltransferase center. This chain is Large ribosomal subunit protein uL6, found in Chlorobium phaeobacteroides (strain BS1).